Here is a 486-residue protein sequence, read N- to C-terminus: CUGBP Elav-like family member 4 (486 aa).

Residues 1–298 (MYIKMATLAN…AAFAAAQMQQ (298 aa)) form a sufficient for RNA-binding and MSE-dependent splicing activity region. Positions 18 to 28 (LSTNGLGSSPG) are enriched in polar residues. 2 disordered regions span residues 18–39 (LSTN…LSHS) and 121–149 (LPGM…QPPS). Residues 54 to 135 (IKLFIGQIPR…RPIQVKPADS (82 aa)) form the RRM 1 domain. Residues 138-149 (RGGSSCLRQPPS) are compositionally biased toward polar residues. An RRM 2 domain is found at 152 to 232 (RKLFVGMLNK…SSLVVKFADT (81 aa)). The tract at residues 239-258 (RRMQQMAGQMGMFNPMAIPF) is necessary for TNNT2 exon 5 inclusion. The RRM 3 domain maps to 404-479 (PQPPPMIPQQ…KRLKVQLKRP (76 aa)).

Belongs to the CELF/BRUNOL family. As to expression, ubiquitous. Strongly expressed in the cerebellum, hippocampus, amygdala, temporal and frontal cortex and frontal lobes.

Its subcellular location is the nucleus. The protein resides in the cytoplasm. RNA-binding protein implicated in the regulation of pre-mRNA alternative splicing. Mediates exon inclusion and/or exclusion in pre-mRNA that are subject to tissue-specific and developmentally regulated alternative splicing. Specifically activates exon 5 inclusion of cardiac isoforms of TNNT2 during heart remodeling at the juvenile to adult transition. Promotes exclusion of both the smooth muscle (SM) and non-muscle (NM) exons in actinin pre-mRNAs. Activates the splicing of MAPT/Tau exon 10. Binds to muscle-specific splicing enhancer (MSE) intronic sites flanking the alternative exon 5 of TNNT2 pre-mRNA. The chain is CUGBP Elav-like family member 4 (CELF4) from Homo sapiens (Human).